Reading from the N-terminus, the 433-residue chain is Nuclear distribution protein PAC1 (433 aa).

Residues 8-40 (QKDELHRAMLAYLHAAGMHNAYAALQHDAALAD) enclose the LisH domain. Positions 57 to 84 (SVIRLQKKVIDLENRNAALLAELAAAAR) form a coiled coil. 7 WD repeats span residues 103 to 144 (SHRA…RTLK), 146 to 184 (HTKA…TNVK), 188 to 227 (GHDH…CIKT), 230 to 269 (GHAE…TKME), 272 to 336 (GHEH…CLRT), 339 to 378 (GHDN…CTKT), and 381 to 429 (AHSH…QTIK).

This sequence belongs to the WD repeat LIS1/nudF family. As to quaternary structure, self-associates. Interacts with NDL1 and dynein.

The protein localises to the cytoplasm. It is found in the cytoskeleton. It localises to the spindle pole. In terms of biological role, positively regulates the activity of the minus-end directed microtubule motor protein dynein. Plays a central role in positioning the mitotic spindle at the bud neck during cell division. Targets cytoplasmic dynein to microtubule plus ends, thereby promoting dynein-mediated microtubule sliding along the bud cortex and consequently the movement of the mitotic spindle to the bud neck. This Cryptococcus neoformans var. neoformans serotype D (strain B-3501A) (Filobasidiella neoformans) protein is Nuclear distribution protein PAC1.